The primary structure comprises 1018 residues: Contactin-1 (1018 aa).

The first 20 residues, 1–20 (MKMWLLFSLLVIISFKTCLS), serve as a signal peptide directing secretion. 6 Ig-like C2-type domains span residues 41 to 131 (PIFE…ATLS), 137 to 223 (PFPP…KSVF), 241 to 326 (PADI…ARIY), 331 to 407 (PEWV…AELK), 413 to 500 (PTFE…GTLV), and 504 to 601 (PTRI…LVVR). 2 disulfides stabilise this stretch: Cys-65/Cys-114 and Cys-158/Cys-211. N-linked (GlcNAc...) asparagine glycosylation is found at Asn-208 and Asn-258. A disulfide bond links Cys-263 and Cys-310. Asn-338 carries N-linked (GlcNAc...) asparagine glycosylation. Intrachain disulfides connect Cys-352/Cys-391 and Cys-436/Cys-484. Residues Asn-457, Asn-473, Asn-494, and Asn-521 are each glycosylated (N-linked (GlcNAc...) asparagine). Cysteines 526 and 583 form a disulfide. Asn-591 carries an N-linked (GlcNAc...) asparagine glycan. 4 Fibronectin type-III domains span residues 606-704 (PPGG…TDGA), 709-806 (APSD…SAQD), 811-906 (APTA…APPS), and 907-1000 (QPPR…ILSP). Disordered regions lie at residues 698 to 718 (KIKT…GGGG) and 891 to 910 (PPSD…QPPR). Residue Ser-999 is the site of GPI-anchor amidated serine attachment. Residues 1000 to 1018 (PCLLGFLLPALGILVYLEF) constitute a propeptide, removed in mature form.

This sequence belongs to the immunoglobulin superfamily. Contactin family. As to quaternary structure, monomer. Interacts with CNTNAP1 in cis form. Binds to the carbonic-anhydrase like domain of PTPRZ1. Interacts with NOTCH1 and TNR. Detected in a complex with NRCAM and PTPRB. Interacts with TASOR.

It localises to the cell membrane. Its function is as follows. Contactins mediate cell surface interactions during nervous system development. Involved in the formation of paranodal axo-glial junctions in myelinated peripheral nerves and in the signaling between axons and myelinating glial cells via its association with CNTNAP1. Participates in oligodendrocytes generation by acting as a ligand of NOTCH1. Its association with NOTCH1 promotes NOTCH1 activation through the released notch intracellular domain (NICD) and subsequent translocation to the nucleus. Interaction with TNR induces a repulsion of neurons and an inhibition of neurite outgrowth. In Bos taurus (Bovine), this protein is Contactin-1 (CNTN1).